Consider the following 241-residue polypeptide: Large ribosomal subunit protein uL1 (241 aa).

It belongs to the universal ribosomal protein uL1 family. Part of the 50S ribosomal subunit.

Its function is as follows. Binds directly to 23S rRNA. The L1 stalk is quite mobile in the ribosome, and is involved in E site tRNA release. Functionally, protein L1 is also a translational repressor protein, it controls the translation of the L11 operon by binding to its mRNA. The chain is Large ribosomal subunit protein uL1 from Streptomyces coelicolor (strain ATCC BAA-471 / A3(2) / M145).